Reading from the N-terminus, the 202-residue chain is Protein-methionine-sulfoxide reductase heme-binding subunit MsrQ (202 aa).

6 consecutive transmembrane segments (helical) span residues 8–28 (LAVF…AWIF), 42–62 (LGLG…LQKL), 75–95 (LGLW…VFIL), 110–130 (PYII…ITSN), 147–167 (LVYL…RADL), and 169–189 (EWTL…PSIA).

This sequence belongs to the MsrQ family. As to quaternary structure, heterodimer of a catalytic subunit (MsrP) and a heme-binding subunit (MsrQ). It depends on FMN as a cofactor. Heme b is required as a cofactor.

The protein localises to the cell inner membrane. Functionally, part of the MsrPQ system that repairs oxidized periplasmic proteins containing methionine sulfoxide residues (Met-O), using respiratory chain electrons. Thus protects these proteins from oxidative-stress damage caused by reactive species of oxygen and chlorine generated by the host defense mechanisms. MsrPQ is essential for the maintenance of envelope integrity under bleach stress, rescuing a wide series of structurally unrelated periplasmic proteins from methionine oxidation. MsrQ provides electrons for reduction to the reductase catalytic subunit MsrP, using the quinone pool of the respiratory chain. This Pseudomonas aeruginosa (strain ATCC 15692 / DSM 22644 / CIP 104116 / JCM 14847 / LMG 12228 / 1C / PRS 101 / PAO1) protein is Protein-methionine-sulfoxide reductase heme-binding subunit MsrQ.